We begin with the raw amino-acid sequence, 361 residues long: dTDP-glucose 4,6-dehydratase 1 (361 aa).

Residues 11–12, 32–35, 58–59, 80–84, and threonine 99 contribute to the NAD(+) site; these read FI, DKLT, DI, and LAAES. Serine 84 is a binding site for substrate. Threonine 133 provides a ligand contact to substrate. Aspartate 134 acts as the Proton donor in catalysis. Active-site proton acceptor residues include glutamate 135 and tyrosine 167. 167–171 is an NAD(+) binding site; sequence YSASK. Asparagine 196 serves as a coordination point for substrate. Residue asparagine 197 coordinates NAD(+). Residues 206 to 207, 222 to 224, arginine 231, asparagine 266, and 296 to 300 contribute to the substrate site; these read KL, PIY, and DRPGH.

It belongs to the NAD(P)-dependent epimerase/dehydratase family. dTDP-glucose dehydratase subfamily. Homodimer. Requires NAD(+) as cofactor.

It catalyses the reaction dTDP-alpha-D-glucose = dTDP-4-dehydro-6-deoxy-alpha-D-glucose + H2O. The protein operates within carbohydrate biosynthesis; dTDP-L-rhamnose biosynthesis. It functions in the pathway bacterial outer membrane biogenesis; LPS O-antigen biosynthesis. Its function is as follows. Catalyzes the dehydration of dTDP-D-glucose to form dTDP-6-deoxy-D-xylo-4-hexulose via a three-step process involving oxidation, dehydration and reduction. The protein is dTDP-glucose 4,6-dehydratase 1 (rfbB) of Escherichia coli (strain K12).